The primary structure comprises 222 residues: Proteoglycan 3 (222 aa).

An N-terminal signal peptide occupies residues 1–17 (MKQPLILSFLLLGMVSA). A compositionally biased stretch (basic and acidic residues) spans 27–46 (NPKREESLKQEADGSREQGR). The disordered stretch occupies residues 27–100 (NPKREESLKQ…PKEEDTTHFQ (74 aa)). The segment covering 71 to 81 (FEDEEAMESDP) has biased composition (acidic residues). A compositionally biased stretch (basic and acidic residues) spans 83-97 (ALNKDSACPKEEDTT). Residues 105-221 (CKSCNYVLVR…CKSHLPFICS (117 aa)) enclose the C-type lectin domain. Cystine bridges form between cysteine 126–cysteine 220 and cysteine 197–cysteine 212.

As to expression, expressed in bone marrow, spleen, and thymus. Not detected in heart, liver or lung.

In terms of biological role, possesses similar cytotoxic and cytostimulatory activities to PRG2/MBP. The sequence is that of Proteoglycan 3 from Mus musculus (Mouse).